Here is a 107-residue protein sequence, read N- to C-terminus: Nucleoid-associated protein A1G_07310 (107 aa).

This sequence belongs to the YbaB/EbfC family. In terms of assembly, homodimer.

Its subcellular location is the cytoplasm. It is found in the nucleoid. In terms of biological role, binds to DNA and alters its conformation. May be involved in regulation of gene expression, nucleoid organization and DNA protection. In Rickettsia rickettsii (strain Sheila Smith), this protein is Nucleoid-associated protein A1G_07310.